A 265-amino-acid chain; its full sequence is GTP cyclohydrolase 1 type 2 homolog (265 aa).

A divalent metal cation is bound by residues histidine 65, aspartate 103, histidine 225, and glutamate 228.

The protein belongs to the GTP cyclohydrolase I type 2/NIF3 family. Homohexamer.

This chain is GTP cyclohydrolase 1 type 2 homolog, found in Streptococcus pneumoniae serotype 4 (strain ATCC BAA-334 / TIGR4).